Consider the following 195-residue polypeptide: IQVAAQNCWVKKGGAFTGEVSAEMLANLGVPWVILGHSERRALLNETNEFVGDKVAYALSQGLKVIACVGETLEQREAGTTMEVVAAQTKAIADKISSWDNVVLAYEPVWAIGTGKVASPAQAQEVHAGLRKWFCDNVSAEVSASTRIIYGGSVSGSNCKELGGQTDVDGFLVGGASLKPEFIDIIKAAEVKKSA.

The Electrophile role is filled by His-37. Glu-107 acts as the Proton acceptor in catalysis.

This sequence belongs to the triosephosphate isomerase family. In terms of assembly, homodimer.

It is found in the cytoplasm. The enzyme catalyses D-glyceraldehyde 3-phosphate = dihydroxyacetone phosphate. It participates in carbohydrate biosynthesis; gluconeogenesis. It functions in the pathway carbohydrate degradation; glycolysis; D-glyceraldehyde 3-phosphate from glycerone phosphate: step 1/1. The protein is Triosephosphate isomerase, cytosolic of Lactuca sativa (Garden lettuce).